The following is a 130-amino-acid chain: Small ribosomal subunit protein uS9 (130 aa).

It belongs to the universal ribosomal protein uS9 family.

The polypeptide is Small ribosomal subunit protein uS9 (Nitrosospira multiformis (strain ATCC 25196 / NCIMB 11849 / C 71)).